A 751-amino-acid polypeptide reads, in one-letter code: NAD(P)H-quinone oxidoreductase subunit 5, chloroplastic (751 aa).

The next 16 membrane-spanning stretches (helical) occupy residues 9–29 (WIIP…LIIF), 40–60 (WAFP…KLSI), 89–109 (VDPL…LVLI), 125–145 (FAYL…SNFI), 147–167 (IYIF…FWFT), 185–205 (GDFG…SFEF), 219–239 (NEVH…GAVA), 258–278 (TPIS…FLVA), 280–300 (LFPL…VGII), 327–347 (LGYM…FHLI), 354–374 (ALLF…VGYS), 396–416 (TAFL…CFWS), 425–445 (WLYS…TAFY), 543–563 (LFPL…GIPF), 599–619 (FLTN…LASF), and 719–739 (ISSY…IYYF).

The protein belongs to the complex I subunit 5 family. In terms of assembly, NDH is composed of at least 16 different subunits, 5 of which are encoded in the nucleus.

The protein localises to the plastid. Its subcellular location is the chloroplast thylakoid membrane. The catalysed reaction is a plastoquinone + NADH + (n+1) H(+)(in) = a plastoquinol + NAD(+) + n H(+)(out). The enzyme catalyses a plastoquinone + NADPH + (n+1) H(+)(in) = a plastoquinol + NADP(+) + n H(+)(out). In terms of biological role, NDH shuttles electrons from NAD(P)H:plastoquinone, via FMN and iron-sulfur (Fe-S) centers, to quinones in the photosynthetic chain and possibly in a chloroplast respiratory chain. The immediate electron acceptor for the enzyme in this species is believed to be plastoquinone. Couples the redox reaction to proton translocation, and thus conserves the redox energy in a proton gradient. The protein is NAD(P)H-quinone oxidoreductase subunit 5, chloroplastic (ndhF) of Fagopyrum esculentum subsp. ancestrale (Wild buckwheat).